A 63-amino-acid chain; its full sequence is Large ribosomal subunit protein bL32c (63 aa).

The segment at 38–63 is disordered; it reads RSFSGVSEHPKPKGFSRQQTNNRVLG. Residues 53–63 are compositionally biased toward polar residues; it reads SRQQTNNRVLG.

It belongs to the bacterial ribosomal protein bL32 family.

It is found in the plastid. Its subcellular location is the chloroplast. This chain is Large ribosomal subunit protein bL32c (rpl32), found in Oryza sativa (Rice).